The primary structure comprises 659 residues: Endoglucanase A (659 aa).

A catalytic region spans residues 1 to 500; it reads MLIFETYLIL…SKLPNFPPKE (500 aa). Asp-101 (nucleophile) is an active-site residue. The tract at residues 413–433 is disordered; it reads NSPKHPHHRTAHGSWSNQLTN. Catalysis depends on residues His-419, Asp-457, and Glu-466. Residues 501–658 enclose the CBM3 domain; that stretch reads QVEDEFFVEA…GVLVFGTLPD (158 aa).

This sequence belongs to the glycosyl hydrolase 9 (cellulase E) family.

Its subcellular location is the secreted. It catalyses the reaction Endohydrolysis of (1-&gt;4)-beta-D-glucosidic linkages in cellulose, lichenin and cereal beta-D-glucans.. Its activity is regulated as follows. Strongly inhibited by ZnCl(2) and by EDTA. Functionally, active on carboxymethyl cellulose and carboxymethyl cellulose-RBB but not avicel, xanthan gum, carboxymethyl-curdulan-RBB or carboxymethyl-xylan-RBB. This chain is Endoglucanase A (eglA), found in Bacillus pumilus (Bacillus mesentericus).